Here is a 617-residue protein sequence, read N- to C-terminus: UvrABC system protein C (617 aa).

Positions 11–85 (TTPGVYIFRK…IKQHRPHYNV (75 aa)) constitute a GIY-YIG domain. The UVR domain occupies 194–229 (APVIARLKEDMKVAAQGQDFEQAARLRDRVQAVEKL).

Belongs to the UvrC family. Interacts with UvrB in an incision complex.

The protein localises to the cytoplasm. Its function is as follows. The UvrABC repair system catalyzes the recognition and processing of DNA lesions. UvrC both incises the 5' and 3' sides of the lesion. The N-terminal half is responsible for the 3' incision and the C-terminal half is responsible for the 5' incision. The protein is UvrABC system protein C of Deinococcus radiodurans (strain ATCC 13939 / DSM 20539 / JCM 16871 / CCUG 27074 / LMG 4051 / NBRC 15346 / NCIMB 9279 / VKM B-1422 / R1).